We begin with the raw amino-acid sequence, 97 residues long: uncharacterized protein (97 aa).

The segment covering 1 to 24 (MTQKNGADRPDDYKRFSSLDKEYD) has biased composition (basic and acidic residues). A disordered region spans residues 1–97 (MTQKNGADRP…FEGTIDQNLD (97 aa)). The span at 31 to 43 (SNTETESVNTETQ) shows a compositional bias: low complexity. Residues 44–53 (THNKENKNDT) are compositionally biased toward basic and acidic residues.

This is an uncharacterized protein from Bacillus subtilis (strain 168).